A 278-amino-acid polypeptide reads, in one-letter code: Casein kinase II subunit beta (278 aa).

Disordered stretches follow at residues 1-22 (MSQE…DSGA) and 78-111 (DEEE…RNKS). An N-acetylserine modification is found at S2. A Phosphoserine modification is found at S2. A compositionally biased stretch (acidic residues) spans 78–94 (DEEEDEDDVVEEDEVDQ).

This sequence belongs to the casein kinase 2 subunit beta family. Tetramer composed of an alpha subunit, an alpha' subunit, one beta subunit and one beta' subunit. Interacts with FACT subunits POB3 and SPT16. interacts with YTA7. In terms of processing, phosphorylated by alpha subunit.

Its function is as follows. Regulatory subunit of casein kinase II/CK2. As part of the kinase complex regulates the basal catalytic activity of the alpha subunit a constitutively active serine/threonine-protein kinase that phosphorylates a large number of substrates containing acidic residues C-terminal to the phosphorylated serine or threonine. This Saccharomyces cerevisiae (strain ATCC 204508 / S288c) (Baker's yeast) protein is Casein kinase II subunit beta (CKB1).